We begin with the raw amino-acid sequence, 169 residues long: Disulfide bond formation protein B 1 (169 aa).

The Cytoplasmic portion of the chain corresponds to Met-1–Tyr-14. The chain crosses the membrane as a helical span at residues Leu-15–Tyr-31. The Periplasmic portion of the chain corresponds to Met-32 to Tyr-49. Cys-41 and Cys-44 are joined by a disulfide. The chain crosses the membrane as a helical span at residues Ala-50–Met-64. Over Arg-65–Thr-71 the chain is Cytoplasmic. Residues Val-72–Gly-89 form a helical membrane-spanning segment. At His-90 to Gln-144 the chain is on the periplasmic side. The cysteines at positions 102 and 130 are disulfide-linked. A helical membrane pass occupies residues Trp-145–Arg-163. Residues Asn-164–Arg-169 are Cytoplasmic-facing.

Belongs to the DsbB family.

Its subcellular location is the cell inner membrane. In terms of biological role, required for disulfide bond formation in some periplasmic proteins. Acts by oxidizing the DsbA protein. The chain is Disulfide bond formation protein B 1 from Pseudomonas fluorescens (strain Pf0-1).